The primary structure comprises 287 residues: Ethanolamine ammonia-lyase small subunit (287 aa).

Positions 168, 189, and 218 each coordinate adenosylcob(III)alamin.

It belongs to the EutC family. The basic unit is a heterodimer which dimerizes to form tetramers. The heterotetramers trimerize; 6 large subunits form a core ring with 6 small subunits projecting outwards. The cofactor is adenosylcob(III)alamin.

It localises to the bacterial microcompartment. It catalyses the reaction ethanolamine = acetaldehyde + NH4(+). It functions in the pathway amine and polyamine degradation; ethanolamine degradation. Functionally, catalyzes the deamination of various vicinal amino-alcohols to oxo compounds. Allows this organism to utilize ethanolamine as the sole source of nitrogen and carbon in the presence of external vitamin B12. This is Ethanolamine ammonia-lyase small subunit from Pseudomonas syringae pv. tomato (strain ATCC BAA-871 / DC3000).